A 967-amino-acid chain; its full sequence is Phosphoenolpyruvate carboxylase (967 aa).

S11 carries the phosphoserine modification. Active-site residues include H172 and K601.

This sequence belongs to the PEPCase type 1 family. Homotetramer. Mg(2+) is required as a cofactor.

Its subcellular location is the cytoplasm. It carries out the reaction oxaloacetate + phosphate = phosphoenolpyruvate + hydrogencarbonate. It functions in the pathway photosynthesis; C3 acid pathway. Its activity is regulated as follows. By light-reversible phosphorylation. Functionally, through the carboxylation of phosphoenolpyruvate (PEP) it forms oxaloacetate, a four-carbon dicarboxylic acid source for the tricarboxylic acid cycle. The polypeptide is Phosphoenolpyruvate carboxylase (PPCA1) (Flaveria pringlei).